We begin with the raw amino-acid sequence, 415 residues long: Peptide chain release factor subunit 1-2 (415 aa).

It belongs to the eukaryotic release factor 1 family. Heterodimer of two subunits, one of which binds GTP.

Its subcellular location is the cytoplasm. Functionally, directs the termination of nascent peptide synthesis (translation) in response to the termination codons UAA, UAG and UGA. In Methanosarcina acetivorans (strain ATCC 35395 / DSM 2834 / JCM 12185 / C2A), this protein is Peptide chain release factor subunit 1-2.